A 208-amino-acid chain; its full sequence is Putative 3-methyladenine DNA glycosylase (208 aa).

The protein belongs to the DNA glycosylase MPG family.

This chain is Putative 3-methyladenine DNA glycosylase, found in Lactobacillus delbrueckii subsp. bulgaricus (strain ATCC 11842 / DSM 20081 / BCRC 10696 / JCM 1002 / NBRC 13953 / NCIMB 11778 / NCTC 12712 / WDCM 00102 / Lb 14).